The sequence spans 217 residues: Uracil-DNA glycosylase (217 aa).

The active-site Proton acceptor is the D62.

This sequence belongs to the uracil-DNA glycosylase (UDG) superfamily. UNG family.

The protein resides in the cytoplasm. It catalyses the reaction Hydrolyzes single-stranded DNA or mismatched double-stranded DNA and polynucleotides, releasing free uracil.. Excises uracil residues from the DNA which can arise as a result of misincorporation of dUMP residues by DNA polymerase or due to deamination of cytosine. The sequence is that of Uracil-DNA glycosylase from Streptococcus pneumoniae (strain JJA).